Consider the following 185-residue polypeptide: Putative manganese efflux pump MntP (185 aa).

6 helical membrane-spanning segments follow: residues 3 to 23 (PFAVVLLAFSMSVDAFAVSVG), 41 to 61 (AVFGVVEAITPVIGWVAGVAA), 70 to 90 (HWLAFGLLAAVGLHMLYAAVW), 101 to 121 (SFTVLMATAIGTSLDAMAVGV), 123 to 143 (LAFLNVNIVVVATAIGLATFL), and 165 to 185 (AVAGIALFGLGLSILIEHLTA).

This sequence belongs to the MntP (TC 9.B.29) family.

It is found in the cell inner membrane. Its function is as follows. Probably functions as a manganese efflux pump. The sequence is that of Putative manganese efflux pump MntP from Bradyrhizobium sp. (strain BTAi1 / ATCC BAA-1182).